A 464-amino-acid chain; its full sequence is Argininosuccinate lyase (464 aa).

It belongs to the lyase 1 family. Argininosuccinate lyase subfamily.

Its subcellular location is the cytoplasm. The catalysed reaction is 2-(N(omega)-L-arginino)succinate = fumarate + L-arginine. The protein operates within amino-acid biosynthesis; L-arginine biosynthesis; L-arginine from L-ornithine and carbamoyl phosphate: step 3/3. The protein is Argininosuccinate lyase of Pseudomonas paraeruginosa (strain DSM 24068 / PA7) (Pseudomonas aeruginosa (strain PA7)).